The following is a 92-amino-acid chain: Beta-2-microglobulin (92 aa).

The region spanning 2-91 (PQIQVYTRHP…VSLNEPKTVI (90 aa)) is the Ig-like C1-type domain. The cysteines at positions 22 and 77 are disulfide-linked.

Belongs to the beta-2-microglobulin family. In terms of assembly, heterodimer of an alpha chain and a beta chain. Beta-2-microglobulin is the beta-chain of major histocompatibility complex class I molecules.

The protein resides in the secreted. Its function is as follows. Component of the class I major histocompatibility complex (MHC). Involved in the presentation of peptide antigens to the immune system. In Mus cervicolor (Fawn-colored mouse), this protein is Beta-2-microglobulin (B2m).